Consider the following 77-residue polypeptide: Exodeoxyribonuclease 7 small subunit (77 aa).

The protein belongs to the XseB family. As to quaternary structure, heterooligomer composed of large and small subunits.

Its subcellular location is the cytoplasm. It catalyses the reaction Exonucleolytic cleavage in either 5'- to 3'- or 3'- to 5'-direction to yield nucleoside 5'-phosphates.. Bidirectionally degrades single-stranded DNA into large acid-insoluble oligonucleotides, which are then degraded further into small acid-soluble oligonucleotides. The chain is Exodeoxyribonuclease 7 small subunit from Alkaliphilus oremlandii (strain OhILAs) (Clostridium oremlandii (strain OhILAs)).